Here is a 407-residue protein sequence, read N- to C-terminus: Probable peptidoglycan glycosyltransferase FtsW (407 aa).

Residues 1–25 (MSIDFRNIIKPYPSPIITGRGIDLD) lie on the Cytoplasmic side of the membrane. A helical membrane pass occupies residues 26 to 46 (FPMLAGCLALLGLGLVMITSA). The Periplasmic portion of the chain corresponds to 47–65 (SSEVAAVQSGNTLYMMIRH). Residues 66 to 86 (LVYLVIGLGACIVTMMIPIAT) form a helical membrane-spanning segment. At 87–89 (WQR) the chain is on the cytoplasmic side. Residues 90 to 110 (LGWLMLIGAFGLLIMVILPGI) form a helical membrane-spanning segment. At 111–119 (GREVNGSMR) the chain is on the periplasmic side. A helical membrane pass occupies residues 120 to 140 (WIGFGAFNVQPSEIAKVFVVI). Topologically, residues 141–155 (YLAGYLVRRQKEVRE) are cytoplasmic. The helical transmembrane segment at 156 to 176 (SWMGFFKPFIVLLPMAGLLLM) threads the bilayer. At 177–181 (EPDFG) the chain is on the periplasmic side. A helical membrane pass occupies residues 182 to 202 (ATVVMMGAAAAMLFLGGVGLF). A topological domain (cytoplasmic) is located at residue R203. The chain crosses the membrane as a helical span at residues 204–224 (FTLMVVLAVAAVTVLVQAQPY). The Periplasmic segment spans residues 225–283 (RMARLITFTDPWSDQFGSGYQLTQALIAFGRGEWLGVGLGNSVQKQFYLPEAHTDFVFS). Residues 284-304 (VLAEELGVVGSLCTVALFVFV) form a helical membrane-spanning segment. At 305–321 (CVRGMYIGMWAEKAKQY) the chain is on the cytoplasmic side. The chain crosses the membrane as a helical span at residues 322-342 (FAAYVAYGLSFLWIGQFLINI). Residues 343–355 (GVNVGLLPTKGLT) lie on the Periplasmic side of the membrane. The chain crosses the membrane as a helical span at residues 356 to 376 (LPFLSYGGSSLVICCACLGLL). The Cytoplasmic portion of the chain corresponds to 377–407 (LRIEWESRTHLGSEEMEFSESDFAEEPTHGR).

It belongs to the SEDS family. FtsW subfamily.

The protein resides in the cell inner membrane. The enzyme catalyses [GlcNAc-(1-&gt;4)-Mur2Ac(oyl-L-Ala-gamma-D-Glu-L-Lys-D-Ala-D-Ala)](n)-di-trans,octa-cis-undecaprenyl diphosphate + beta-D-GlcNAc-(1-&gt;4)-Mur2Ac(oyl-L-Ala-gamma-D-Glu-L-Lys-D-Ala-D-Ala)-di-trans,octa-cis-undecaprenyl diphosphate = [GlcNAc-(1-&gt;4)-Mur2Ac(oyl-L-Ala-gamma-D-Glu-L-Lys-D-Ala-D-Ala)](n+1)-di-trans,octa-cis-undecaprenyl diphosphate + di-trans,octa-cis-undecaprenyl diphosphate + H(+). Its pathway is cell wall biogenesis; peptidoglycan biosynthesis. Peptidoglycan polymerase that is essential for cell division. This Pseudomonas fluorescens (strain SBW25) protein is Probable peptidoglycan glycosyltransferase FtsW.